The following is a 343-amino-acid chain: Heat-inducible transcription repressor HrcA (343 aa).

Belongs to the HrcA family.

Its function is as follows. Negative regulator of class I heat shock genes (grpE-dnaK-dnaJ and groELS operons). Prevents heat-shock induction of these operons. The protein is Heat-inducible transcription repressor HrcA of Mycolicibacterium vanbaalenii (strain DSM 7251 / JCM 13017 / BCRC 16820 / KCTC 9966 / NRRL B-24157 / PYR-1) (Mycobacterium vanbaalenii).